Reading from the N-terminus, the 186-residue chain is Elongation factor P (186 aa).

The protein belongs to the elongation factor P family.

The protein localises to the cytoplasm. The protein operates within protein biosynthesis; polypeptide chain elongation. In terms of biological role, involved in peptide bond synthesis. Stimulates efficient translation and peptide-bond synthesis on native or reconstituted 70S ribosomes in vitro. Probably functions indirectly by altering the affinity of the ribosome for aminoacyl-tRNA, thus increasing their reactivity as acceptors for peptidyl transferase. In Streptococcus mutans serotype c (strain ATCC 700610 / UA159), this protein is Elongation factor P.